The sequence spans 340 residues: Sulfotransferase 2B1 (340 aa).

67 to 72 (KSGTNW) is a binding site for 3'-phosphoadenylyl sulfate. Residues Trp-95 and Trp-100 each contribute to the substrate site. Residue His-122 is the Proton acceptor of the active site. 3'-phosphoadenylyl sulfate contacts are provided by residues Arg-144, Ser-152, Tyr-207, 241–246 (SAFAAM), and 271–273 (RKG). The tract at residues 301–340 (LPSFPWDRSAEDGSPDGETEPSPSPSPGLASDDPNPGSSQ) is disordered.

It belongs to the sulfotransferase 1 family. As to expression, isoform 1 is expressed in skin and testis. Higher level of isoform 2 expressed in skin and intestine, moderate level in the kidney, low level in liver, stomach and placenta.

It is found in the cytoplasm. It localises to the cytosol. The protein resides in the microsome. Its subcellular location is the nucleus. It catalyses the reaction an alcohol + 3'-phosphoadenylyl sulfate = an alkyl sulfate + adenosine 3',5'-bisphosphate + H(+). The catalysed reaction is pregnenolone + 3'-phosphoadenylyl sulfate = pregnenolone sulfate + adenosine 3',5'-bisphosphate + H(+). The enzyme catalyses 3beta-hydroxyandrost-5-en-17-one + 3'-phosphoadenylyl sulfate = dehydroepiandrosterone 3-sulfate + adenosine 3',5'-bisphosphate + H(+). It carries out the reaction cholesterol + 3'-phosphoadenylyl sulfate = cholesterol sulfate + adenosine 3',5'-bisphosphate + H(+). Functionally, sulfotransferase that utilizes 3'-phospho-5'-adenylyl sulfate (PAPS) as sulfonate donor to catalyze the sulfate conjugation. Sulfonation increases the water solubility of most compounds, and therefore their renal excretion, but it can also result in bioactivation to form active metabolites. Sulfonates cholesterol. Catalyzes sulfation of the 3beta-hydroxyl groups of steroids, such as, pregnenolone and dehydroepiandrosterone (DHEA). Conjugates efficiently cholesterol but has a greater affinity for pregnenolone sulfation. Does not show high activity with DHEA. Plays a role in epidermal cholesterol metabolism and in the regulation of epidermal proliferation and differentiation. Prefers pregnenolone over DHEA as a substrate and does not sulfate cholesterol. The chain is Sulfotransferase 2B1 from Rattus norvegicus (Rat).